The chain runs to 65 residues: Metallothionein-like protein type 3 (65 aa).

This sequence belongs to the metallothionein superfamily. Type 15 family.

Functionally, metallothioneins have a high content of cysteine residues that bind various heavy metals. The chain is Metallothionein-like protein type 3 from Musa acuminata (Banana).